A 287-amino-acid polypeptide reads, in one-letter code: ATP synthase gamma chain (287 aa).

Belongs to the ATPase gamma chain family. F-type ATPases have 2 components, CF(1) - the catalytic core - and CF(0) - the membrane proton channel. CF(1) has five subunits: alpha(3), beta(3), gamma(1), delta(1), epsilon(1). CF(0) has three main subunits: a, b and c.

Its subcellular location is the cell inner membrane. Functionally, produces ATP from ADP in the presence of a proton gradient across the membrane. The gamma chain is believed to be important in regulating ATPase activity and the flow of protons through the CF(0) complex. In Ectopseudomonas mendocina (strain ymp) (Pseudomonas mendocina), this protein is ATP synthase gamma chain.